A 338-amino-acid chain; its full sequence is tRNA-specific 2-thiouridylase MnmA (338 aa).

ATP is bound by residues 6 to 13 and methionine 32; that span reads AMSGGVDS. The active-site Nucleophile is the cysteine 92. A disulfide bond links cysteine 92 and cysteine 186. Glycine 116 contributes to the ATP binding site. An interaction with tRNA region spans residues 134–136; sequence KDQ. The active-site Cysteine persulfide intermediate is the cysteine 186. The interval 288-289 is interaction with tRNA; sequence RY.

The protein belongs to the MnmA/TRMU family.

The protein resides in the cytoplasm. It carries out the reaction S-sulfanyl-L-cysteinyl-[protein] + uridine(34) in tRNA + AH2 + ATP = 2-thiouridine(34) in tRNA + L-cysteinyl-[protein] + A + AMP + diphosphate + H(+). Its function is as follows. Catalyzes the 2-thiolation of uridine at the wobble position (U34) of tRNA, leading to the formation of s(2)U34. The protein is tRNA-specific 2-thiouridylase MnmA of Campylobacter lari (strain RM2100 / D67 / ATCC BAA-1060).